Consider the following 926-residue polypeptide: Peripheral plasma membrane protein CASK (926 aa).

The region spanning 12 to 276 is the Protein kinase domain; it reads YELCEVIGKG…VYEALNHPWL (265 aa). ATP-binding positions include 18 to 26 and Lys-41; that span reads IGKGPFSVV. Ser-51 is modified (phosphoserine). Residue Asp-141 is part of the active site. Phosphoserine; by autocatalysis occurs at positions 151 and 155. Thr-182 bears the Phosphothreonine mark. Residues Lys-192 and Ser-313 each carry the phosphoserine modification. Positions 305-315 are calmodulin-binding; that stretch reads KGAVLAAVSSH. L27 domains are found at residues 343-398 and 402-455; these read AERA…SPQI and PSDA…YSDE. The segment at 482–909 is required for interaction with NRXN1 (via C-terminal tail); it reads MENVTRVRLV…DETIRHLEEA (428 aa). Positions 489–564 constitute a PDZ domain; it reads RLVQFQKNTD…MLREMRGSIT (76 aa). Residues Tyr-571 and Ser-577 each carry the phosphoserine modification. Residues 574 to 610 are disordered; that stretch reads QSSSCERDSPSTSRQSPANGHSSTNNSVSDLPSTTQP. Positions 612 to 682 constitute an SH3 domain; sequence GRQIYVRAQF…PSPELQEWRV (71 aa). One can recognise a Guanylate kinase-like domain in the interval 739–911; the sequence is RKTLVLLGAH…TIRHLEEAVE (173 aa).

It in the N-terminal section; belongs to the protein kinase superfamily. CAMK Ser/Thr protein kinase family. CaMK subfamily. This sequence belongs to the MAGUK family. As to quaternary structure, CASK and LIN7 form two mutually exclusive tripartite complexes with APBA1 or CASKIN1. Component of the brain-specific heterotrimeric complex (LIN-10-LIN-2-LIN-7 complex) composed of at least APBA1, CASK, and LIN7, which associates with the motor protein KIF17 to transport vesicles along microtubules. Forms a heterotrimeric complex with DLG1 and LIN7B via their L27 domains. Identified in a complex with ACTN4, IQGAP1, MAGI2, NPHS1, SPTAN1 and SPTBN1. Part of a complex containing CASK, TBR1 and TSPYL2. Interacts with WHRN. Interacts (via the PDZ, SH3 and guanylate kinase-like domains) with NRXN1 (via C-terminus). Interacts with CASKIN1, APBA1, LIN7(A/B/C) and L27 domain of DLG1 and isoform 2 of DLG4. Interacts with FCHSD2. Interacts with KIRREL3. Interacts with TBR1. Interacts with TSPYL2. Unlike other protein kinases, does not require a divalent cation such as magnesium for catalytic activity. serves as cofactor. Ubiquitous. Expression is significantly greater in brain relative to kidney, lung, and liver and in fetal brain and kidney relative to lung and liver.

It is found in the nucleus. The protein localises to the cytoplasm. The protein resides in the cell membrane. The catalysed reaction is L-seryl-[protein] + ATP = O-phospho-L-seryl-[protein] + ADP + H(+). The enzyme catalyses L-threonyl-[protein] + ATP = O-phospho-L-threonyl-[protein] + ADP + H(+). With respect to regulation, differs from archetypal CaMK members in that the kinase domain exhibits a constitutively active conformation and the autoinhibitory region does not engage in direct contact with the ATP-binding cleft, although it still binds Ca(2+)/CAM. Multidomain scaffolding Mg(2+)-independent protein kinase that catalyzes the phosphotransfer from ATP to proteins such as NRXN1, and plays a role in synaptic transmembrane protein anchoring and ion channel trafficking. Contributes to neural development and regulation of gene expression via interaction with the transcription factor TBR1. Binds to cell-surface proteins, including amyloid precursor protein, neurexins and syndecans. May mediate a link between the extracellular matrix and the actin cytoskeleton via its interaction with syndecan and with the actin/spectrin-binding protein 4.1. Component of the LIN-10-LIN-2-LIN-7 complex, which associates with the motor protein KIF17 to transport vesicles containing N-methyl-D-aspartate (NMDA) receptor subunit NR2B along microtubules. The chain is Peripheral plasma membrane protein CASK from Homo sapiens (Human).